Consider the following 322-residue polypeptide: uncharacterized protein (322 aa).

5 helical membrane passes run 159–179 (GIIF…MLYL), 203–223 (MNIP…YIWL), 234–254 (GGIL…RVGL), 267–287 (FEGS…LIPY), and 296–316 (TLLS…FFAW).

The protein localises to the membrane. This is an uncharacterized protein from Dictyostelium discoideum (Social amoeba).